We begin with the raw amino-acid sequence, 78 residues long: LYR motif-containing protein 9 (78 aa).

Belongs to the complex I LYR family. LYRM9 subfamily.

The protein is LYR motif-containing protein 9 (Lyrm9) of Mus musculus (Mouse).